The sequence spans 545 residues: Leucine-rich repeat LGI family member 2 (545 aa).

Positions 1–28 are cleaved as a signal peptide; sequence MALRRGGCGALGLLLLLLGAACLIPRSA. One can recognise an LRRNT domain in the interval 29-65; that stretch reads QVRRLARCPATCSCTKESIICVGSSWVPRIVPGDISS. N-linked (GlcNAc...) asparagine glycosylation is present at Asn70. 3 LRR repeats span residues 86–107, 110–131, and 134–155; these read SLQL…AFAG, HLEY…AFRG, and DLTH…VFSD. In terms of domain architecture, LRRCT spans 167-217; the sequence is NKFECDCKAKWLYLWLKMTNSTVSDVLCIGPPEYQEKKLNDVTSFDYECTT. An N-linked (GlcNAc...) asparagine glycan is attached at Asn186. EAR repeat units lie at residues 219 to 261, 265 to 307, 311 to 358, 360 to 403, 407 to 450, 452 to 494, and 498 to 540; these read DFVV…EWDH, NFRS…KYDE, KFVK…KWNS, GFYS…QWNK, KFVP…RWNS, QFVE…QWDK, and LFKK…EHII. The N-linked (GlcNAc...) asparagine glycan is linked to Asn271. Asn402 carries an N-linked (GlcNAc...) asparagine glycan.

Brain, heart and placenta.

The protein resides in the secreted. Functionally, required for the development of soma-targeting inhibitory GABAergic synapses made by parvalbumin-positive basket cells. This Homo sapiens (Human) protein is Leucine-rich repeat LGI family member 2 (LGI2).